The sequence spans 130 residues: Transcription antitermination protein NusB (130 aa).

The protein belongs to the NusB family.

Its function is as follows. Involved in transcription antitermination. Required for transcription of ribosomal RNA (rRNA) genes. Binds specifically to the boxA antiterminator sequence of the ribosomal RNA (rrn) operons. This chain is Transcription antitermination protein NusB, found in Bacillus velezensis (strain DSM 23117 / BGSC 10A6 / LMG 26770 / FZB42) (Bacillus amyloliquefaciens subsp. plantarum).